Consider the following 1873-residue polypeptide: Girdin (1873 aa).

Residues 12-132 (QFMTSPLVTW…KLLLLLLGCA (121 aa)) enclose the Calponin-homology (CH) domain. Positions 196–425 (HLRRLIDERD…EMAQKQSMDE (230 aa)) form a coiled coil. Residues Ser233, Ser237, and Ser449 each carry the phosphoserine modification. 2 coiled-coil regions span residues 458 to 1232 (TSSK…ESKN) and 1268 to 1385 (HKNL…KFYD). Disordered stretches follow at residues 816–841 (ENKSLEQETSQLEKDKKQLEKENKRL) and 1013–1034 (EERMVQSSIPVSGEDDKWGRES). Ser1020 bears the Phosphoserine mark. At Ser1387 the chain carries Phosphoserine. Residues 1390–1408 (RRRGNWITLKMRKLIKSKK) form a phosphoinositide-binding region. A compositionally biased stretch (basic and acidic residues) spans 1407-1416 (KKDINRERQK). Disordered regions lie at residues 1407–1459 (KKDI…LGTK), 1560–1602 (TTSF…SNNN), and 1616–1643 (QSRPQSHSSGDFSLLHDHETWSSSGSSP). Ser1417 carries the post-translational modification Phosphoserine; by PKB/AKT1. Polar residues-rich tracts occupy residues 1417–1430 (SLTLTPTRSDSSEG), 1445–1459 (VGSNSLEDGQTLGTK), 1560–1579 (TTSFEDISPQGISDDSSTGS), and 1616–1626 (QSRPQSHSSGD). Position 1421 is a phosphothreonine (Thr1421). The short motif at 1674–1704 (KAGSPGSEVVTLQQFLEESNKLTSIQLKSSS) is the GBA element. A phosphoserine mark is found at Ser1677, Ser1692, and Ser1719. The interval 1715–1825 (SLSVSSDFLG…GTTRRTSIHD (111 aa)) is SH2-like; required for interaction with growth factor receptors. The segment at 1738 to 1873 (SGKTPGDFYD…KSRSREQQSS (136 aa)) is disordered. Residues 1745–1755 (FYDRRTTKPEF) are compositionally biased toward basic and acidic residues. The residue at position 1767 (Tyr1767) is a Phosphotyrosine. Composition is skewed to polar residues over residues 1768 to 1781 (TISSAGKPTPSTQG), 1789 to 1801 (TSVSRQSKDSNPY), and 1809 to 1820 (SVISTAEGTTRR). Phosphotyrosine is present on Tyr1801. Phosphoserine occurs at positions 1822 and 1839. Over residues 1822–1832 (SIHDFLSKDSR) the composition is skewed to basic and acidic residues. Low complexity predominate over residues 1839-1852 (SSPPTAGSSSTTAS). The span at 1858 to 1873 (QESRNSKSRSREQQSS) shows a compositional bias: basic and acidic residues.

This sequence belongs to the CCDC88 family. As to quaternary structure, homodimer. Interacts (via GBA motif) with guanine nucleotide-binding protein G(i) alpha subunits GNAI1, GNAI2 and GNAI3. Also interacts (via GNA motif) with guanine nucleotide-binding protein G(s) alpha subunit GNAS. Interaction with G(i) alpha subunits occurs before interaction with GNAS and is regulated by phosphorylation; phosphorylation at Ser-1677 enhances binding to G(i) alpha subunits while phosphorylation at Ser-1692 abolishes G(i) alpha subunit binding, promoting binding to GNAS. Interacts (via C-terminal SH2-like region) with growth factor receptors EGFR, INSR and KDR/VEGFR2 (via their autophosphorylated cytoplasmic tails). Forms a complex with EGFR and GNAI3 which leads to enhanced EGFR signaling and triggering of cell migration; ligand stimulation is required for recruitment of GNAI3 to the complex. Interacts (tyrosine-phosphorylated form) with phosphatidylinositol 3-kinase (PI3K) regulatory subunit PIK3R1/p85a (via SH2 domains); the interaction enables recruitment of PIK3R1 to the EGFR receptor, enhancing PI3K activity and cell migration. Interacts with serine/threonine-protein kinase PRKCQ; the interaction leads to phosphorylation of CCDC88A and inhibition of its guanine nucleotide exchange factor activity. Interacts (via C-terminus) with DISC1; the interaction is direct. Interacts with AKT proteins; the interaction is inhibited in the presence of DISC1. Interacts with AKT1/PKB (via C-terminus). The non-phosphorylated form interacts with phosphatidylinositol 4-phosphate [Pi(4)P] and weakly with phosphatidylinositol 3-phosphate [Pi(3)P]. Interacts with microtubules. Interacts with actin. In terms of processing, phosphorylation is induced by epidermal growth factor (EGF) in a phosphoinositide 3-kinase (PI3K)-dependent manner. Phosphorylation by AKT1/PKB is necessary for the delocalization from the cell membrane and for cell migration. Phosphorylated on tyrosine residues which promotes binding to phosphatidylinositol 3-kinase (PI3K) regulatory subunit PIK3R1/p85a and enhances PI3K activity. Tyrosine-phosphorylated by both receptor and non-receptor tyrosine kinases in vitro. Tyrosine phosphorylation is required for AKT1-dependent phosphorylation of Ser-1417. Phosphorylation at Ser-1692 by PRKCQ disrupts interaction with GNAI3 and inhibits guanine nucleotide exchange factor activity. As to expression, expressed in the dentate gyrus, pyramidal cell layer of hippocampal regions CA1 and CA3 at postnatal 15. Expressed highly in neurons. Weakly in neuron progenitors (at protein level). Expressed in the dentate granule cell layer of the hippocampus. Expressed highly in the adult testis, moderately in the brain and at a low level in the spleen, lungs and fat.

It localises to the cell membrane. The protein resides in the cytoplasm. Its subcellular location is the cytosol. The protein localises to the cytoplasmic vesicle. It is found in the cell projection. It localises to the lamellipodium. The protein resides in the cytoskeleton. Its subcellular location is the cilium basal body. The protein localises to the microtubule organizing center. It is found in the centrosome. It localises to the centriole. Bifunctional modulator of guanine nucleotide-binding proteins (G proteins). Acts as a non-receptor guanine nucleotide exchange factor which binds to and activates guanine nucleotide-binding protein G(i) alpha subunits. Also acts as a guanine nucleotide dissociation inhibitor for guanine nucleotide-binding protein G(s) subunit alpha GNAS. Essential for cell migration. Interacts in complex with G(i) alpha subunits with the EGFR receptor, retaining EGFR at the cell membrane following ligand stimulation and promoting EGFR signaling which triggers cell migration. Binding to Gi-alpha subunits displaces the beta and gamma subunits from the heterotrimeric G-protein complex which enhances phosphoinositide 3-kinase (PI3K)-dependent phosphorylation and kinase activity of AKT1/PKB. Phosphorylation of AKT1/PKB induces the phosphorylation of downstream effectors GSK3 and FOXO1/FKHR, and regulates DNA replication and cell proliferation. Binds in its tyrosine-phosphorylated form to the phosphatidylinositol 3-kinase (PI3K) regulatory subunit PIK3R1 which enables recruitment of PIK3R1 to the EGFR receptor, enhancing PI3K activity and cell migration. Plays a role as a key modulator of the AKT-mTOR signaling pathway, controlling the tempo of the process of newborn neuron integration during adult neurogenesis, including correct neuron positioning, dendritic development and synapse formation. Inhibition of G(s) subunit alpha GNAS leads to reduced cellular levels of cAMP and suppression of cell proliferation. Essential for the integrity of the actin cytoskeleton. Required for formation of actin stress fibers and lamellipodia. May be involved in membrane sorting in the early endosome. Plays a role in ciliogenesis and cilium morphology and positioning and this may partly be through regulation of the localization of scaffolding protein CROCC/Rootletin. The protein is Girdin (Ccdc88a) of Mus musculus (Mouse).